Consider the following 864-residue polypeptide: Seed linoleate 9S-lipoxygenase-2 (864 aa).

In terms of domain architecture, PLAT spans 46–171; the sequence is SGINIIGSTL…LYKSPRIFFA (126 aa). Residues 174–864 enclose the Lipoxygenase domain; sequence SYLPSETPSP…FRGIPNSISI (691 aa). The disordered stretch occupies residues 230–264; that stretch reads PILGGSSTHPYPRRGRTGRYPTRKDPNSEKPATET. Over residues 251–264 the composition is skewed to basic and acidic residues; it reads TRKDPNSEKPATET. His524, His529, His716, Asn720, and Ile864 together coordinate Fe cation.

Belongs to the lipoxygenase family. Fe cation is required as a cofactor.

It is found in the cytoplasm. The catalysed reaction is (9Z,12Z)-octadecadienoate + O2 = (9S)-hydroperoxy-(10E,12Z)-octadecadienoate. It participates in lipid metabolism; oxylipin biosynthesis. Functionally, plant lipoxygenase may be involved in a number of diverse aspects of plant physiology including growth and development, pest resistance, and senescence or responses to wounding. It catalyzes the hydroperoxidation of lipids containing a cis,cis-1,4-pentadiene structure. This chain is Seed linoleate 9S-lipoxygenase-2 (LOX1.2), found in Pisum sativum (Garden pea).